The chain runs to 91 residues: Molybdopterin synthase sulfur carrier subunit (91 aa).

G91 carries the 1-thioglycine; alternate modification. G91 is modified (glycyl adenylate; alternate).

Belongs to the MoaD family. MOCS2A subfamily. In terms of assembly, heterotetramer; composed of 2 small (MOCS2A) and 2 large (MOCS2B) subunits. In terms of processing, C-terminal thiocarboxylation occurs in 2 steps, it is first acyl-adenylated (-COAMP) via the hesA/moeB/thiF part of MOCS3, then thiocarboxylated (-COSH) via the rhodanese domain of MOCS3.

It localises to the cytoplasm. The protein operates within cofactor biosynthesis; molybdopterin biosynthesis. Its function is as follows. Acts as a sulfur carrier required for molybdopterin biosynthesis. Component of the molybdopterin synthase complex that catalyzes the conversion of precursor Z into molybdopterin by mediating the incorporation of 2 sulfur atoms into precursor Z to generate a dithiolene group. In the complex, serves as sulfur donor by being thiocarboxylated (-COSH) at its C-terminus by MOCS3. After interaction with MOCS2B, the sulfur is then transferred to precursor Z to form molybdopterin. The sequence is that of Molybdopterin synthase sulfur carrier subunit from Anopheles gambiae (African malaria mosquito).